Here is a 341-residue protein sequence, read N- to C-terminus: Malate dehydrogenase 1, mitochondrial (341 aa).

The N-terminal 22 residues, 1 to 22 (MFRSMLVRSSASAKQAVIRRSF), are a transit peptide targeting the mitochondrion. Residues 36 to 42 (GAAGGIG) and aspartate 62 contribute to the NAD(+) site. Substrate contacts are provided by arginine 109 and arginine 115. NAD(+)-binding positions include asparagine 122 and 145–147 (ISN). Residues asparagine 147 and arginine 181 each contribute to the substrate site. Histidine 205 (proton acceptor) is an active-site residue. An NAD(+)-binding site is contributed by methionine 256.

It belongs to the LDH/MDH superfamily. MDH type 1 family. In terms of assembly, homodimer. Post-translationally, forms intramolecular disulfide bonds. As to expression, expressed in rosette leaves.

Its subcellular location is the mitochondrion matrix. The catalysed reaction is (S)-malate + NAD(+) = oxaloacetate + NADH + H(+). With respect to regulation, negatively regulated by ATP. Not redox-regulated. The formation of intramolecular disulfide bonds does not alter enzymatic activity. In terms of biological role, catalyzes a reversible NAD-dependent dehydrogenase reaction involved in central metabolism and redox homeostasis between organelle compartments. Required for carbon dioxide and energy partitioning in leaves. May limit photorespiration during the dark phase. Its activity is essential to shuttle reductants out from the mitochondria to support the photorespiratory flux. Can convert 2-oxoglutarate to (S)-2-hydroxyglutarate in vitro. The chain is Malate dehydrogenase 1, mitochondrial from Arabidopsis thaliana (Mouse-ear cress).